The chain runs to 337 residues: Ribosomal RNA small subunit methyltransferase H (337 aa).

Residues 45 to 47 (GGH), aspartate 64, phenylalanine 91, aspartate 120, and glutamine 127 each bind S-adenosyl-L-methionine.

The protein belongs to the methyltransferase superfamily. RsmH family.

It localises to the cytoplasm. The catalysed reaction is cytidine(1402) in 16S rRNA + S-adenosyl-L-methionine = N(4)-methylcytidine(1402) in 16S rRNA + S-adenosyl-L-homocysteine + H(+). Specifically methylates the N4 position of cytidine in position 1402 (C1402) of 16S rRNA. In Corynebacterium glutamicum (strain R), this protein is Ribosomal RNA small subunit methyltransferase H.